The chain runs to 153 residues: uncharacterized protein (153 aa).

This is an uncharacterized protein from Allochromatium vinosum (strain ATCC 17899 / DSM 180 / NBRC 103801 / NCIMB 10441 / D) (Chromatium vinosum).